The chain runs to 335 residues: MSEPAQKKQKVANNSLEQLKASGTVVVADTGDFGSIAKFQPQDSTTNPSLILAAAKQPTYAKLIDVAVEYGKKHGKTTEEQVENAVDRLLVEFGKEILKIVPGRVSTEVDARLSFDTQATIEKARHIIKLFEQEGVSKERVLIKIASTWEGIQAAKELEEKDGIHCNLTLLFSFVQAVACAEAQVTLISPFVGRILDWYKSSTGKDYKGEADPGVISVKKIYNYYKKYGYKTIVMGASFRSTDEIKNLAGVDYLTISPALLDKLMNSTEPFPRVLDPVSAKKEAGDKISYISDESKFRFDLNEDAMATEKLSEGIRKFSADIVTLFDLIEKKVTA.

At serine 2 the chain carries N-acetylserine. Catalysis depends on lysine 144, which acts as the Schiff-base intermediate with substrate.

Belongs to the transaldolase family. Type 1 subfamily. In terms of assembly, homodimer.

The catalysed reaction is D-sedoheptulose 7-phosphate + D-glyceraldehyde 3-phosphate = D-erythrose 4-phosphate + beta-D-fructose 6-phosphate. It participates in carbohydrate degradation; pentose phosphate pathway; D-glyceraldehyde 3-phosphate and beta-D-fructose 6-phosphate from D-ribose 5-phosphate and D-xylulose 5-phosphate (non-oxidative stage): step 2/3. Its function is as follows. Transaldolase is important for the balance of metabolites in the pentose-phosphate pathway. The polypeptide is Transaldolase (TAL1) (Saccharomyces cerevisiae (strain ATCC 204508 / S288c) (Baker's yeast)).